We begin with the raw amino-acid sequence, 447 residues long: Sporulation protein YpeB (447 aa).

Belongs to the YpeB family.

Functionally, required for spore cortex hydrolysis during germination. Appears to be required for either expression, localization, activation or function of SleB. The chain is Sporulation protein YpeB from Oceanobacillus iheyensis (strain DSM 14371 / CIP 107618 / JCM 11309 / KCTC 3954 / HTE831).